The primary structure comprises 494 residues: Probable malate:quinone oxidoreductase (494 aa).

It belongs to the MQO family. Requires FAD as cofactor.

The enzyme catalyses (S)-malate + a quinone = a quinol + oxaloacetate. Its pathway is carbohydrate metabolism; tricarboxylic acid cycle; oxaloacetate from (S)-malate (quinone route): step 1/1. The polypeptide is Probable malate:quinone oxidoreductase (Helicobacter hepaticus (strain ATCC 51449 / 3B1)).